Here is a 516-residue protein sequence, read N- to C-terminus: MRLHAFTLLSLLGLVPSFAAASLSGSVGPLTSASAKAAKKTCNVLDYGAKADKKTDLGPPLAAAFAACKSGGLVYIPAGNYAMSTWVKLANGKAWALQIDGVIYRTGTDGGNMIMIEHTSDFELYSSTSSGAMQGLGYELHAANNWSGPRLLRLWDVSDFSVHDLILVDSPSFHFSIDTCSNGEVYNMAIRGGNHGGLDGVDVWSTNIWIHDVEVTNKDECVTVKSPAKNILVENIYCNLSGGCGMGSLGADTDISDITYKNIYTWNSNQMMMIKSNGGSGTVSNVVLENFIGHGNAYSLDIDSYWSSMSAVSGDGVELSNITIKNWKGTEANGAQRGPIKIICPDKVPCYNILIEDFAMWTETGSKQWYSCQSAYGSGFCLKSGSHHTSYAVTTTTVSSAPSGYSAAKMPLDLSTDFGSTQSIPIPTIPTSFYPGATPYSALMSKQSTKAAKARAVDMSVETPAAASRSEQVVQGASQETSQPAPESAGPVRSVPTGGNRPSRHRHGHHHFWIAA.

A signal peptide spans 1-21 (MRLHAFTLLSLLGLVPSFAAA). A disulfide bridge connects residues cysteine 42 and cysteine 68. N-linked (GlcNAc...) asparagine glycosylation occurs at asparagine 145. The active-site Proton donor is the aspartate 219. Cysteine 221 and cysteine 238 are oxidised to a cystine. Asparagine 239 carries an N-linked (GlcNAc...) asparagine glycan. Histidine 294 is an active-site residue. N-linked (GlcNAc...) asparagine glycosylation occurs at asparagine 321. 2 cysteine pairs are disulfide-bonded: cysteine 344–cysteine 350 and cysteine 372–cysteine 381. The interval 462–516 (ETPAAASRSEQVVQGASQETSQPAPESAGPVRSVPTGGNRPSRHRHGHHHFWIAA) is disordered. Polar residues predominate over residues 469 to 485 (RSEQVVQGASQETSQPA). Residues 502–516 (PSRHRHGHHHFWIAA) are compositionally biased toward basic residues.

It belongs to the glycosyl hydrolase 28 family.

The protein resides in the secreted. The enzyme catalyses Endohydrolysis of alpha-D-GalA-(1-&gt;2)-alpha-L-Rha glycosidic bond in the rhamnogalacturonan I backbone with initial inversion of anomeric configuration releasing oligosaccharides with beta-D-GalA at the reducing end.. Functionally, pectinolytic enzymes consist of four classes of enzymes: pectine lyase, polygalacturonase, pectin methylesterase and rhamnogalacturonase. Hydrolyzes alpha-D-galacturonopyranosyl-(1,2)-alpha-L-rhamnopyranosyl linkages in the backbone of the hairy regions of pectins. The polypeptide is Probable rhamnogalacturonase B (rhgB) (Neosartorya fischeri (strain ATCC 1020 / DSM 3700 / CBS 544.65 / FGSC A1164 / JCM 1740 / NRRL 181 / WB 181) (Aspergillus fischerianus)).